We begin with the raw amino-acid sequence, 255 residues long: TIR domain-containing protein (255 aa).

A TIR domain is found at 9–185; that stretch reads LSDQVFINFR…DIVKEVKKQL (177 aa). The active site involves Glu83. The next 2 membrane-spanning stretches (helical) occupy residues 195–215 and 223–243; these read AIGV…FIAP and FFQT…SWFW. The 55-residue stretch at 201-255 folds into the KASH domain; that stretch reads LAITINLIFSFFIAPKYLPDQKFFQTPEWFIGTLAVVLASWFWYKNNQNKAPPPS.

Forms homomers. Interacts with SUN1, SUN2, SUN3, SUN4 and SUN5.

Its subcellular location is the nucleus membrane. The enzyme catalyses NAD(+) + H2O = ADP-D-ribose + nicotinamide + H(+). Could play a role in nuclear morphology, specifically nuclear size. This Arabidopsis thaliana (Mouse-ear cress) protein is TIR domain-containing protein.